A 142-amino-acid chain; its full sequence is Transcriptional regulator MraZ (142 aa).

SpoVT-AbrB domains lie at 5-51 (ASAL…PRPE) and 77-120 (AMDV…DSQT).

Belongs to the MraZ family. Forms oligomers.

The protein resides in the cytoplasm. The protein localises to the nucleoid. This is Transcriptional regulator MraZ from Burkholderia ambifaria (strain MC40-6).